A 63-amino-acid chain; its full sequence is Translational regulator CsrA (63 aa).

This sequence belongs to the CsrA/RsmA family. Homodimer; the beta-strands of each monomer intercalate to form a hydrophobic core, while the alpha-helices form wings that extend away from the core.

The protein localises to the cytoplasm. Its function is as follows. A key translational regulator that binds mRNA to regulate translation initiation and/or mRNA stability. Mediates global changes in gene expression, shifting from rapid growth to stress survival by linking envelope stress, the stringent response and the catabolite repression systems. Usually binds in the 5'-UTR; binding at or near the Shine-Dalgarno sequence prevents ribosome-binding, repressing translation, binding elsewhere in the 5'-UTR can activate translation and/or stabilize the mRNA. Its function is antagonized by small RNA(s). The protein is Translational regulator CsrA of Haemophilus influenzae (strain PittEE).